The sequence spans 203 residues: Ribosomal RNA small subunit methyltransferase G (203 aa).

S-adenosyl-L-methionine-binding positions include Gly-73, Leu-78, 124–125 (VE), and Arg-139.

This sequence belongs to the methyltransferase superfamily. RNA methyltransferase RsmG family.

It is found in the cytoplasm. It catalyses the reaction guanosine(527) in 16S rRNA + S-adenosyl-L-methionine = N(7)-methylguanosine(527) in 16S rRNA + S-adenosyl-L-homocysteine. Specifically methylates the N7 position of guanine in position 527 of 16S rRNA. In Haemophilus influenzae (strain PittEE), this protein is Ribosomal RNA small subunit methyltransferase G.